A 512-amino-acid chain; its full sequence is NADH-quinone oxidoreductase subunit N (512 aa).

14 consecutive transmembrane segments (helical) span residues 32 to 52 (VLPALVLATGGVFLICLSVLF), 57 to 77 (FIIVRYVSGLILLLAFAAVFY), 97 to 117 (VLSFWLNLIYISMAIGTAAIV), 126 to 146 (IEFPEFYPLLLFATCGMTLMT), 151 to 171 (FILVFVALELMSICLYILIGM), 186 to 206 (FLLGSFSSGFMLMGIAFLFGG), 231 to 251 (IGLVLFITGVAFKIALFPYHA), 264 to 284 (VTGYMSTAAKAASIGLLLILY), 296 to 316 (WAWLPGILALCSMIYGNLLAL), 324 to 344 (MLAYSSIAHAGYVVAGISAGI), 348 to 368 (VLFYLIVYSFMSLGAFAILAY), 392 to 412 (AIAINIFFMSLAGVPPFGGFW), 431 to 451 (ILLIGGVTNSALALYYYLRIG), and 473 to 493 (VGVTGVVLFCLLMVSVGWFLL).

The protein belongs to the complex I subunit 2 family. In terms of assembly, NDH-1 is composed of 14 different subunits. Subunits NuoA, H, J, K, L, M, N constitute the membrane sector of the complex.

The protein localises to the cell inner membrane. It carries out the reaction a quinone + NADH + 5 H(+)(in) = a quinol + NAD(+) + 4 H(+)(out). In terms of biological role, NDH-1 shuttles electrons from NADH, via FMN and iron-sulfur (Fe-S) centers, to quinones in the respiratory chain. The immediate electron acceptor for the enzyme in this species is believed to be ubiquinone. Couples the redox reaction to proton translocation (for every two electrons transferred, four hydrogen ions are translocated across the cytoplasmic membrane), and thus conserves the redox energy in a proton gradient. This chain is NADH-quinone oxidoreductase subunit N, found in Leptospira interrogans serogroup Icterohaemorrhagiae serovar Lai (strain 56601).